The primary structure comprises 208 residues: Thiamine-phosphate synthase (208 aa).

Residues 37-41 and Asn-73 each bind 4-amino-2-methyl-5-(diphosphooxymethyl)pyrimidine; that span reads QYREK. Mg(2+)-binding residues include Asp-74 and Asp-93. Residue Ser-112 participates in 4-amino-2-methyl-5-(diphosphooxymethyl)pyrimidine binding. 139 to 141 provides a ligand contact to 2-[(2R,5Z)-2-carboxy-4-methylthiazol-5(2H)-ylidene]ethyl phosphate; the sequence is TIS. Residue Lys-142 coordinates 4-amino-2-methyl-5-(diphosphooxymethyl)pyrimidine. Residues Gly-171 and 191-192 each bind 2-[(2R,5Z)-2-carboxy-4-methylthiazol-5(2H)-ylidene]ethyl phosphate; that span reads IS.

This sequence belongs to the thiamine-phosphate synthase family. It depends on Mg(2+) as a cofactor.

The catalysed reaction is 2-[(2R,5Z)-2-carboxy-4-methylthiazol-5(2H)-ylidene]ethyl phosphate + 4-amino-2-methyl-5-(diphosphooxymethyl)pyrimidine + 2 H(+) = thiamine phosphate + CO2 + diphosphate. It carries out the reaction 2-(2-carboxy-4-methylthiazol-5-yl)ethyl phosphate + 4-amino-2-methyl-5-(diphosphooxymethyl)pyrimidine + 2 H(+) = thiamine phosphate + CO2 + diphosphate. It catalyses the reaction 4-methyl-5-(2-phosphooxyethyl)-thiazole + 4-amino-2-methyl-5-(diphosphooxymethyl)pyrimidine + H(+) = thiamine phosphate + diphosphate. It participates in cofactor biosynthesis; thiamine diphosphate biosynthesis; thiamine phosphate from 4-amino-2-methyl-5-diphosphomethylpyrimidine and 4-methyl-5-(2-phosphoethyl)-thiazole: step 1/1. Its function is as follows. Condenses 4-methyl-5-(beta-hydroxyethyl)thiazole monophosphate (THZ-P) and 2-methyl-4-amino-5-hydroxymethyl pyrimidine pyrophosphate (HMP-PP) to form thiamine monophosphate (TMP). This chain is Thiamine-phosphate synthase, found in Listeria welshimeri serovar 6b (strain ATCC 35897 / DSM 20650 / CCUG 15529 / CIP 8149 / NCTC 11857 / SLCC 5334 / V8).